We begin with the raw amino-acid sequence, 96 residues long: UPF0235 protein Acid345_4205 (96 aa).

It belongs to the UPF0235 family.

This is UPF0235 protein Acid345_4205 from Koribacter versatilis (strain Ellin345).